A 1376-amino-acid chain; its full sequence is Major capsid protein (1376 aa).

The protein belongs to the herpesviridae major capsid protein family. In terms of assembly, homomultimer. Makes the hexons and eleven out of twelve pentons. Interacts with triplex proteins 1/TRX1 and 2/TRX2; adjacent capsomers are linked together in groups of three by triplexes, heterotrimeric complexes composed of one molecule of TRX1 and two molecules of TRX2. Interacts with scaffold protein; this interaction allows efficient MCP transport to the host nucleus. Interacts with capsid vertex component 2/CVC2. Interacts with the small capsomere-interacting protein/SCP.

Its subcellular location is the virion. The protein resides in the host nucleus. Functionally, self-assembles to form an icosahedral capsid with a T=16 symmetry, about 200 nm in diameter, and consisting of 150 hexons and 12 pentons (total of 162 capsomers). Hexons form the edges and faces of the capsid and are each composed of six MCP molecules. In contrast, one penton is found at each of the 12 vertices. Eleven of the pentons are MCP pentamers, while the last vertex is occupied by the portal complex. The capsid is surrounded by a layer of proteinaceous material designated the tegument which, in turn, is enclosed in an envelope of host cell-derived lipids containing virus-encoded glycoproteins. This is Major capsid protein from Equus caballus (Horse).